A 324-amino-acid polypeptide reads, in one-letter code: Phospho-N-acetylmuramoyl-pentapeptide-transferase (324 aa).

The next 10 helical transmembrane spans lie at 5–25 (GLLVTAGVAFLISVALSPLFI), 52–72 (PTMGGIVIYVSMMVTSLIMAI), 77–97 (LGAEVSLLLLVTFGYGLIGFL), 122–142 (VIAIAFFLIGKGQAFHTYIMI), 149–169 (FELGWAYFVLVLFMLIGGSNA), 176–196 (LDGLLSGTAAIAFGAFSIIAV), 201–221 (FGVAIFCMAVVGAVLGFLVFN), 227–247 (VFMGDTGSLALGGAIAAVAIL), 253–273 (LLVIIGGVFVMETLSVIIQVI), and 302–322 (VVVTFWSVGFLLAVLGIYIGV).

It belongs to the glycosyltransferase 4 family. MraY subfamily. Requires Mg(2+) as cofactor.

It is found in the cell membrane. The enzyme catalyses UDP-N-acetyl-alpha-D-muramoyl-L-alanyl-gamma-D-glutamyl-meso-2,6-diaminopimeloyl-D-alanyl-D-alanine + di-trans,octa-cis-undecaprenyl phosphate = di-trans,octa-cis-undecaprenyl diphospho-N-acetyl-alpha-D-muramoyl-L-alanyl-D-glutamyl-meso-2,6-diaminopimeloyl-D-alanyl-D-alanine + UMP. The protein operates within cell wall biogenesis; peptidoglycan biosynthesis. Functionally, catalyzes the initial step of the lipid cycle reactions in the biosynthesis of the cell wall peptidoglycan: transfers peptidoglycan precursor phospho-MurNAc-pentapeptide from UDP-MurNAc-pentapeptide onto the lipid carrier undecaprenyl phosphate, yielding undecaprenyl-pyrophosphoryl-MurNAc-pentapeptide, known as lipid I. The chain is Phospho-N-acetylmuramoyl-pentapeptide-transferase from Bacillus cereus (strain AH820).